Reading from the N-terminus, the 210-residue chain is Adenylate kinase (210 aa).

10–15 provides a ligand contact to ATP; it reads GSGKGT. The interval 30 to 54 is NMP; sequence SCGDILRKQNKCCDINKLIKKGELI. AMP contacts are provided by residues arginine 36, 52–54, 80–83, and glutamine 87; these read ELI and GFPR. The segment at 117–154 is LID; the sequence is GRIIDKVSGEIYHLKFNPPKFITEKSNKNKILVRRLDD. ATP contacts are provided by residues arginine 118 and 127-128; that span reads IY. 2 residues coordinate AMP: arginine 151 and arginine 162. Phenylalanine 195 provides a ligand contact to ATP.

This sequence belongs to the adenylate kinase family. In terms of assembly, monomer.

Its subcellular location is the cytoplasm. It catalyses the reaction AMP + ATP = 2 ADP. Its pathway is purine metabolism; AMP biosynthesis via salvage pathway; AMP from ADP: step 1/1. In terms of biological role, catalyzes the reversible transfer of the terminal phosphate group between ATP and AMP. Plays an important role in cellular energy homeostasis and in adenine nucleotide metabolism. The chain is Adenylate kinase from Wigglesworthia glossinidia brevipalpis.